The chain runs to 115 residues: Nucleoid-associated protein tlr0723 (115 aa).

This sequence belongs to the YbaB/EbfC family. In terms of assembly, homodimer.

The protein resides in the cytoplasm. It localises to the nucleoid. Its function is as follows. Binds to DNA and alters its conformation. May be involved in regulation of gene expression, nucleoid organization and DNA protection. The protein is Nucleoid-associated protein tlr0723 of Thermosynechococcus vestitus (strain NIES-2133 / IAM M-273 / BP-1).